Consider the following 322-residue polypeptide: Ferrochelatase (322 aa).

Fe cation is bound by residues His194 and Glu275.

The protein belongs to the ferrochelatase family.

The protein resides in the cytoplasm. The enzyme catalyses heme b + 2 H(+) = protoporphyrin IX + Fe(2+). It functions in the pathway porphyrin-containing compound metabolism; protoheme biosynthesis; protoheme from protoporphyrin-IX: step 1/1. Its function is as follows. Catalyzes the ferrous insertion into protoporphyrin IX. The protein is Ferrochelatase of Yersinia enterocolitica serotype O:8 / biotype 1B (strain NCTC 13174 / 8081).